The chain runs to 401 residues: Chalcone synthase 5 (401 aa).

The active site involves Cys168.

The protein belongs to the thiolase-like superfamily. Chalcone/stilbene synthases family.

It carries out the reaction (E)-4-coumaroyl-CoA + 3 malonyl-CoA + 3 H(+) = 2',4,4',6'-tetrahydroxychalcone + 3 CO2 + 4 CoA. It participates in secondary metabolite biosynthesis; flavonoid biosynthesis. In terms of biological role, the primary product of this enzyme is 4,2',4',6'-tetrahydroxychalcone (also termed naringenin-chalcone or chalcone) which can under specific conditions spontaneously isomerize into naringenin. The protein is Chalcone synthase 5 (CHS5) of Sorghum bicolor (Sorghum).